Here is a 61-residue protein sequence, read N- to C-terminus: Metallothionein-2 (61 aa).

Methionine 1 is subject to N-acetylmethionine. Residues 1–29 are beta; the sequence is MDPNCSCAAGGSCTCAGSCKCKECRCTSC. Residues cysteine 5, cysteine 7, cysteine 13, cysteine 15, cysteine 19, cysteine 21, cysteine 24, cysteine 26, cysteine 29, cysteine 33, cysteine 34, cysteine 36, cysteine 37, cysteine 41, cysteine 44, cysteine 48, cysteine 50, and cysteine 57 each coordinate a divalent metal cation. Positions 30-61 are alpha; that stretch reads KKSCCSCCPVGCAKCAQGCICKGASDKCSCCA. A Phosphoserine modification is found at serine 58. A divalent metal cation contacts are provided by cysteine 59 and cysteine 60.

Belongs to the metallothionein superfamily. Type 1 family. As to quaternary structure, interacts with EOLA1.

Metallothioneins have a high content of cysteine residues that bind various heavy metals; these proteins are transcriptionally regulated by both heavy metals and glucocorticoids. This Canis lupus familiaris (Dog) protein is Metallothionein-2 (MT2A).